We begin with the raw amino-acid sequence, 326 residues long: Glutaredoxin 3 (326 aa).

Residues 1 to 108 (MANFTDAASL…LTNKVQRLGS (108 aa)) form the Thioredoxin domain. Glutaredoxin domains follow at residues 125–227 (NQRL…VSLE) and 227–326 (ENRL…KGEN). [2Fe-2S] cluster contacts are provided by cysteine 150 and cysteine 252.

Homodimer; the homodimer is independent of 2Fe-2S clusters. Heterotrimer; forms a heterotrimeric complex composed by two bola2 molecules and one glrx3 molecule; linked by [2Fe-2S] clusters.

The protein localises to the cytoplasm. Its subcellular location is the cytosol. Its function is as follows. Together with bola2, acts as a cytosolic iron-sulfur (Fe-S) cluster assembly factor that facilitates [2Fe-2S] cluster insertion into a subset of cytosolic proteins. Required for hemoglobin maturation. Does not possess any thyoredoxin activity since it lacks the conserved motif that is essential for catalytic activity. This is Glutaredoxin 3 (glrx3) from Danio rerio (Zebrafish).